The following is a 41-amino-acid chain: Pi-stichotoxin-Hcr5c (41 aa).

3 disulfide bridges follow: C4–C37, C6–C30, and C20–C38.

It belongs to the sea anemone type 3 (BDS) potassium channel toxin family.

The protein localises to the secreted. Its subcellular location is the nematocyst. Functionally, weakly and reversibly inhibits rat homomeric ASIC1 (isoform ASIC1a) (IC(50)=4.95 uM), and ASIC3 (IC(50)=17 uM). ASIC1a current inhibition and ASIC3 transient current inhibition are not complete, and reach a maximum of 70% inhibition and 80%, respectively. This chain is Pi-stichotoxin-Hcr5c, found in Radianthus crispa (Leathery sea anemone).